The chain runs to 225 residues: Cytidylate kinase (225 aa).

11 to 19 (GPAAAGKST) contributes to the ATP binding site.

This sequence belongs to the cytidylate kinase family. Type 1 subfamily.

It localises to the cytoplasm. The catalysed reaction is CMP + ATP = CDP + ADP. It carries out the reaction dCMP + ATP = dCDP + ADP. The protein is Cytidylate kinase of Bacillus cereus (strain B4264).